The sequence spans 498 residues: Probable malate:quinone oxidoreductase (498 aa).

This sequence belongs to the MQO family. Requires FAD as cofactor.

It carries out the reaction (S)-malate + a quinone = a quinol + oxaloacetate. It participates in carbohydrate metabolism; tricarboxylic acid cycle; oxaloacetate from (S)-malate (quinone route): step 1/1. In Prochlorococcus marinus (strain MIT 9301), this protein is Probable malate:quinone oxidoreductase.